Here is a 329-residue protein sequence, read N- to C-terminus: Tyrosine--tRNA ligase (329 aa).

Positions 31, 157, 161, 164, and 179 each coordinate L-tyrosine. The short motif at 220-224 is the 'KMSKS' region element; sequence KMSKS. K223 serves as a coordination point for ATP.

It belongs to the class-I aminoacyl-tRNA synthetase family. TyrS type 4 subfamily. As to quaternary structure, homodimer.

Its subcellular location is the cytoplasm. It catalyses the reaction tRNA(Tyr) + L-tyrosine + ATP = L-tyrosyl-tRNA(Tyr) + AMP + diphosphate + H(+). Catalyzes the attachment of tyrosine to tRNA(Tyr) in a two-step reaction: tyrosine is first activated by ATP to form Tyr-AMP and then transferred to the acceptor end of tRNA(Tyr). This chain is Tyrosine--tRNA ligase, found in Picrophilus torridus (strain ATCC 700027 / DSM 9790 / JCM 10055 / NBRC 100828 / KAW 2/3).